The sequence spans 197 residues: RNA chaperone ProQ (197 aa).

The interval 115–138 is disordered; the sequence is RAAAKKAQQKKHPRKPANKNLKKE. Residues 117 to 131 show a composition bias toward basic residues; that stretch reads AAKKAQQKKHPRKPA.

The protein belongs to the ProQ family.

Its subcellular location is the cytoplasm. RNA chaperone with significant RNA binding, RNA strand exchange and RNA duplexing activities. This Haemophilus influenzae (strain ATCC 51907 / DSM 11121 / KW20 / Rd) protein is RNA chaperone ProQ.